Here is a 239-residue protein sequence, read N- to C-terminus: Ribulose-1,5-bisphosphate 5-phosphatase (239 aa).

Catalysis depends on D8, which acts as the Nucleophile. 3 residues coordinate Mg(2+): D8, D10, and D184. D10 (proton donor) is an active-site residue. The tract at residues 205–239 (PSEESDATESADRAATERQADHSIDTLGELTDLVS) is disordered. The segment covering 214 to 228 (SADRAATERQADHSI) has biased composition (basic and acidic residues).

Belongs to the HAD-like hydrolase superfamily. The cofactor is Mg(2+). Mn(2+) is required as a cofactor. Requires Co(2+) as cofactor. Ni(2+) serves as cofactor.

It catalyses the reaction D-ribulose 1,5-bisphosphate + H2O = D-ribulose 1-phosphate + phosphate. With respect to regulation, requires both monovalent and divalent ions for optimal activity. Optimal KCl concentration is higher than 2.5 M. Functionally, phosphatase involved in the non-carboxylating pentose bisphosphate pathway, a nucleoside degradation pathway present in some halophilic archaea. Catalyzes the dephosphorylation of ribulose 1,5-bisphosphate (RuBP) to ribulose 1-phosphate (Ru1P). Shows a strict substrate specificity toward RuBP. This is Ribulose-1,5-bisphosphate 5-phosphatase from Halopiger xanaduensis (strain DSM 18323 / JCM 14033 / SH-6).